The sequence spans 229 residues: PKHD-type hydroxylase BBta_3541 (229 aa).

The region spanning 78–180 is the Fe2OG dioxygenase domain; sequence QIFPPLFNRY…RVASFFWMQS (103 aa). The Fe cation site is built by histidine 98, aspartate 100, and histidine 161. Residue arginine 171 participates in 2-oxoglutarate binding.

Fe(2+) is required as a cofactor. It depends on L-ascorbate as a cofactor.

The chain is PKHD-type hydroxylase BBta_3541 from Bradyrhizobium sp. (strain BTAi1 / ATCC BAA-1182).